Consider the following 386-residue polypeptide: Heat-inducible transcription repressor HrcA (386 aa).

It belongs to the HrcA family.

Its function is as follows. Negative regulator of class I heat shock genes (grpE-dnaK-dnaJ and groELS operons). Prevents heat-shock induction of these operons. The protein is Heat-inducible transcription repressor HrcA of Chlamydia felis (strain Fe/C-56) (Chlamydophila felis).